The following is a 205-amino-acid chain: Endothelial cell-specific chemotaxis regulator (205 aa).

The signal sequence occupies residues 1–24; it reads MGTAGAMQLCWVILGFLLFRGHNS. Topologically, residues 25 to 124 are extracellular; the sequence is QPTMTQTSSS…TSETVLTVAA (100 aa). 2 stretches are compositionally biased toward polar residues: residues 49 to 71 and 86 to 101; these read SSNP…STGT and SRDT…TTMS. The segment at 49–101 is disordered; it reads SSNPGYIPSSEANRPSHLSSTGTPGAGVPSSGRDGGTSRDTFQTVPPNSTTMS. A helical transmembrane segment spans residues 125-145; that stretch reads FGVISFIVILVVVVIILVGVV. Topologically, residues 146–205 are cytoplasmic; sequence SLRFKCRKSKESEDPQKPGSSGLSESCSTANGEKDSITLISMKNINMNNGKQSLSAEKVL. Residues 153–175 are disordered; the sequence is KSKESEDPQKPGSSGLSESCSTA. The segment covering 163–175 has biased composition (polar residues); it reads PGSSGLSESCSTA. The residue at position 198 (S198) is a Phosphoserine.

It belongs to the ECSCR family. Interacts with FLNA. Interacts with the 20S proteasome subunit PSMA7. In terms of processing, may be heavily O-glycosylated. Highest expression in endothelial cells. Also detected in vascular smooth muscle, macrophages, lymphocytes, and mast cells.

It localises to the cell membrane. It is found in the cytoplasm. Its function is as follows. Regulates endothelial chemotaxis and tube formation. Has a role in angiogenesis and apoptosis via modulation of the actin cytoskeleton and facilitation of proteasomal degradation of the apoptosis inhibitors BIRC3/IAP1 and BIRC2/IAP2. The protein is Endothelial cell-specific chemotaxis regulator (ECSCR) of Homo sapiens (Human).